A 248-amino-acid chain; its full sequence is Pyridoxine 5'-phosphate synthase (248 aa).

Residue asparagine 12 coordinates 3-amino-2-oxopropyl phosphate. Residue 14–15 (DH) participates in 1-deoxy-D-xylulose 5-phosphate binding. Arginine 23 serves as a coordination point for 3-amino-2-oxopropyl phosphate. Histidine 48 (proton acceptor) is an active-site residue. The 1-deoxy-D-xylulose 5-phosphate site is built by arginine 50 and histidine 55. The active-site Proton acceptor is glutamate 75. Residue threonine 105 coordinates 1-deoxy-D-xylulose 5-phosphate. Histidine 196 serves as the catalytic Proton donor. Residues glycine 197 and 218–219 (GH) contribute to the 3-amino-2-oxopropyl phosphate site.

The protein belongs to the PNP synthase family. Homooctamer; tetramer of dimers.

It localises to the cytoplasm. The catalysed reaction is 3-amino-2-oxopropyl phosphate + 1-deoxy-D-xylulose 5-phosphate = pyridoxine 5'-phosphate + phosphate + 2 H2O + H(+). Its pathway is cofactor biosynthesis; pyridoxine 5'-phosphate biosynthesis; pyridoxine 5'-phosphate from D-erythrose 4-phosphate: step 5/5. Catalyzes the complicated ring closure reaction between the two acyclic compounds 1-deoxy-D-xylulose-5-phosphate (DXP) and 3-amino-2-oxopropyl phosphate (1-amino-acetone-3-phosphate or AAP) to form pyridoxine 5'-phosphate (PNP) and inorganic phosphate. The sequence is that of Pyridoxine 5'-phosphate synthase from Pseudomonas aeruginosa (strain LESB58).